We begin with the raw amino-acid sequence, 329 residues long: MQFIDEAKIFIKGGNGGDGCVSFRREKFVPNGGPDGGNGGRGGDIIFIGDRHLNTLINFKFKQHFLAQNGRAGAGNNRTGKSGQNLVLKVPVGTQILSNNKEHVIFDLTKDGQEFIIIRGGKGGLGNTYFKSSINQKPRKNTVGEIGDSMWVWLHLKLLSDVGLVGLPNAGKSTFLSAITSAKPKIADYPFTTLTPNLGVVYINNNSFVVADIPGLIAGAHLGQGLGDKFLKHIERCRIIVHLLDITAENLLQNYYTIRDELSSYSLSLKDKTEILCFTKTDTQSNEVIMSKLLELQPVINRVIYPISSYTKYGIKKLLANILSELQKS.

The Obg domain occupies 1–159 (MQFIDEAKIF…MWVWLHLKLL (159 aa)). The region spanning 160-327 (SDVGLVGLPN…LLANILSELQ (168 aa)) is the OBG-type G domain. GTP is bound by residues 166–173 (GLPNAGKS), 191–195 (FTTLT), 212–215 (DIPG), 279–282 (TKTD), and 308–310 (SSY). Mg(2+)-binding residues include Ser173 and Thr193.

The protein belongs to the TRAFAC class OBG-HflX-like GTPase superfamily. OBG GTPase family. Monomer. The cofactor is Mg(2+).

The protein resides in the cytoplasm. An essential GTPase which binds GTP, GDP and possibly (p)ppGpp with moderate affinity, with high nucleotide exchange rates and a fairly low GTP hydrolysis rate. Plays a role in control of the cell cycle, stress response, ribosome biogenesis and in those bacteria that undergo differentiation, in morphogenesis control. The polypeptide is GTPase Obg (Orientia tsutsugamushi (strain Ikeda) (Rickettsia tsutsugamushi)).